The primary structure comprises 150 residues: Cdc42 effector protein 5 (150 aa).

Disordered regions lie at residues 1 to 20 (MPVM…DRGA), 34 to 89 (LHVG…PADP), and 114 to 133 (SETT…QHPK). The region spanning 23–37 (ISAPLGDFRHTLHVG) is the CRIB domain. An Omega-N-methylarginine modification is found at arginine 38. Pro residues-rich tracts occupy residues 55–66 (GPPPEPGAPPVV) and 74–87 (PAAP…PSPA). Basic and acidic residues predominate over residues 114–127 (SETTATKPDGDAHP).

The protein belongs to the BORG/CEP family. Interacts with CDC42 in a GTP-dependent manner, and with SEPT7. Highly expressed in the skeletal muscle.

The protein localises to the endomembrane system. Its subcellular location is the cytoplasm. It is found in the cytoskeleton. Its function is as follows. Probably involved in the organization of the actin cytoskeleton. May act downstream of CDC42 to induce actin filament assembly leading to cell shape changes. Induces pseudopodia formation in fibroblasts. Inhibits MAPK8 independently of CDC42 binding. Controls septin organization and this effect is negatively regulated by CDC42. The protein is Cdc42 effector protein 5 (Cdc42ep5) of Mus musculus (Mouse).